Here is a 165-residue protein sequence, read N- to C-terminus: Putative pre-16S rRNA nuclease (165 aa).

It belongs to the YqgF nuclease family.

It is found in the cytoplasm. Functionally, could be a nuclease involved in processing of the 5'-end of pre-16S rRNA. The sequence is that of Putative pre-16S rRNA nuclease from Brucella anthropi (strain ATCC 49188 / DSM 6882 / CCUG 24695 / JCM 21032 / LMG 3331 / NBRC 15819 / NCTC 12168 / Alc 37) (Ochrobactrum anthropi).